Here is a 145-residue protein sequence, read N- to C-terminus: Large ribosomal subunit protein uL13 (145 aa).

The protein belongs to the universal ribosomal protein uL13 family. As to quaternary structure, part of the 50S ribosomal subunit.

In terms of biological role, this protein is one of the early assembly proteins of the 50S ribosomal subunit, although it is not seen to bind rRNA by itself. It is important during the early stages of 50S assembly. The protein is Large ribosomal subunit protein uL13 of Geobacillus sp. (strain WCH70).